The following is a 507-amino-acid chain: MLNADLKQQLQQLLELMEGDVEFVASLGSDDKSNELKELLNEMAEMSAHITITEKSLKRTPSFSVNRPGEETGITFAGIPLGHEFNSLVLAILQVSGRAPKEKQSIIDQIKGLEGPFHFETFVSLTCQKCPDVVQALNLMSVINPNITHTMIDGAVFREESENIMAVPAVFLDGQEFGNGRMTVQDILTKLGSTQDASEFNDKDPYDVLIVGGGPASGSAAIYTARKGLRTGIVADRIGGQVNDTAGIENFITVKETTGSEFSSNLAEHIAQYDIDTMTGIRATNIEKTDSAIRVTLENDAVLESKTVIISTGASWRKLNIPGEDRLINKGVAFCPHCDGPLFENKDVAVIGGGNSGVEAAIDLAGIVKHVTLFEYASELKADSVLQERLRSLPNVDIKTSAKTTEVIGDDYVTGISYEDMTTGESQVVNLDGIFVQIGLVPNTSWLQNAVELNERGEVMINRDNATNVPGIFAAGDVTDQKNKQIIISMGAGANAALNAFDYIIRN.

An FAD-binding site is contributed by Asp-207 to Ile-222. Cys-335 and Cys-338 are oxidised to a cystine. Asp-347–Ala-361 is a binding site for NAD(+). Thr-467 to Asp-477 contacts FAD.

It belongs to the class-II pyridine nucleotide-disulfide oxidoreductase family. In terms of assembly, homodimer. FAD serves as cofactor.

Functionally, serves to protect the cell against DNA damage by alkyl hydroperoxides. It can use either NADH or NADPH as electron donor for direct reduction of redox dyes or of alkyl hydroperoxides when combined with the AhpC protein. The chain is Alkyl hydroperoxide reductase subunit F (ahpF) from Staphylococcus epidermidis (strain ATCC 35984 / DSM 28319 / BCRC 17069 / CCUG 31568 / BM 3577 / RP62A).